A 210-amino-acid chain; its full sequence is UPF0502 protein Sama_1967 (210 aa).

This sequence belongs to the UPF0502 family.

The polypeptide is UPF0502 protein Sama_1967 (Shewanella amazonensis (strain ATCC BAA-1098 / SB2B)).